We begin with the raw amino-acid sequence, 166 residues long: Peptidoglycan-associated lipoprotein (166 aa).

The N-terminal stretch at 1-21 is a signal peptide; sequence MEMLKFGKFAALALAMAVAVG. Cys-22 carries N-palmitoyl cysteine lipidation. Cys-22 carries the S-diacylglycerol cysteine lipid modification. The OmpA-like domain maps to 54-166; it reads SEEAALRAIT…AQNRRVELRK (113 aa). The tract at residues 147 to 166 is disordered; the sequence is VATGNDEQSWAQNRRVELRK.

The protein belongs to the Pal lipoprotein family. The Tol-Pal system is composed of five core proteins: the inner membrane proteins TolA, TolQ and TolR, the periplasmic protein TolB and the outer membrane protein Pal. They form a network linking the inner and outer membranes and the peptidoglycan layer.

The protein localises to the cell outer membrane. Functionally, part of the Tol-Pal system, which plays a role in outer membrane invagination during cell division and is important for maintaining outer membrane integrity. The protein is Peptidoglycan-associated lipoprotein of Pseudomonas putida (Arthrobacter siderocapsulatus).